A 622-amino-acid polypeptide reads, in one-letter code: Chaperone protein HscA homolog (622 aa).

Belongs to the heat shock protein 70 family.

Its function is as follows. Chaperone involved in the maturation of iron-sulfur cluster-containing proteins. Has a low intrinsic ATPase activity which is markedly stimulated by HscB. In Delftia acidovorans (strain DSM 14801 / SPH-1), this protein is Chaperone protein HscA homolog.